We begin with the raw amino-acid sequence, 295 residues long: Glutamyl-Q tRNA(Asp) synthetase (295 aa).

Residues 9–13 (RFAPT) and E45 contribute to the L-glutamate site. The 'HIGH' region signature appears at 12–22 (PTPSGFLHFGS). C101, C103, Y115, and C119 together coordinate Zn(2+). L-glutamate contacts are provided by Y172 and R190. The 'KMSKS' region signature appears at 228-232 (KLGKS). Residue K231 participates in ATP binding.

This sequence belongs to the class-I aminoacyl-tRNA synthetase family. GluQ subfamily. The cofactor is Zn(2+).

Catalyzes the tRNA-independent activation of glutamate in presence of ATP and the subsequent transfer of glutamate onto a tRNA(Asp). Glutamate is transferred on the 2-amino-5-(4,5-dihydroxy-2-cyclopenten-1-yl) moiety of the queuosine in the wobble position of the QUC anticodon. The polypeptide is Glutamyl-Q tRNA(Asp) synthetase (Pseudomonas entomophila (strain L48)).